Here is a 234-residue protein sequence, read N- to C-terminus: UPF0173 metal-dependent hydrolase RL2074 (234 aa).

It belongs to the UPF0173 family.

The sequence is that of UPF0173 metal-dependent hydrolase RL2074 from Rhizobium johnstonii (strain DSM 114642 / LMG 32736 / 3841) (Rhizobium leguminosarum bv. viciae).